Here is a 198-residue protein sequence, read N- to C-terminus: Cyclin-dependent kinase inhibitor 1B (198 aa).

Positions 1-11 (MSNVRVSNGSP) are enriched in polar residues. The tract at residues 1–34 (MSNVRVSNGSPSLERMDARQAEHPKPSACRNLFG) is disordered. Phosphoserine; by UHMK1 is present on S10. The span at 14-25 (ERMDARQAEHPK) shows a compositional bias: basic and acidic residues. The interaction with CDK2 stretch occupies residues 51–91 (DMEEASQRKWNFDFQNHKPLEGKYEWQEVEKGSLPEFYYRP). Y74 carries the phosphotyrosine; by SRC modification. The segment at 85-198 (PEFYYRPPRP…KKPGLRRRQT (114 aa)) is disordered. Y88 is subject to Phosphotyrosine; by ABL, LYN, SRC and JAK2. At Y89 the chain carries Phosphotyrosine. Positions 126–137 (EDTHLVDPKTDP) are enriched in basic and acidic residues. Residues 153–169 (KRPATDDSSTQNKRANR) carry the Nuclear localization signal motif. T157 is modified (phosphothreonine; by CaMK1, PKB/AKT1 and PIM1). T170 bears the Phosphothreonine mark. A compositionally biased stretch (polar residues) spans 175–186 (SDGSPNAGSVEQ). T187 is subject to Phosphothreonine; by PKB/AKT1, CDK1 and CDK2. At T198 the chain carries Phosphothreonine; by CaMK1, PKB/AKT1, RPS6KA1, RPS6KA3 and PIM1.

Belongs to the CDI family. Forms a ternary complex composed of CCNE1, CDK2 and CDKN1B. Interacts directly with CCNE1; the interaction is inhibited by CDK2-dependent phosphorylation on Thr-187. Interacts with COPS5, subunit of the COP9 signalosome complex; the interaction leads to CDKN1B degradation. Interacts with NUP50; the interaction leads to nuclear import and degradation of phosphorylated CDKN1B. Interacts with CCND1 and SNX6. Interacts (Thr-198-phosphorylated form) with 14-3-3 proteins, binds strongly YWHAQ, weakly YWHAE and YWHAH, but not YWHAB nor YWHAZ; the interaction with YWHAQ results in translocation to the cytoplasm. Interacts with AKT1 and LYN; the interactions lead to cytoplasmic mislocation, phosphorylation of CDKN1B and inhibition of cell cycle arrest. Forms a ternary complex with CCNA2 and CDK2; CDKN1B inhibits the kinase activity of CDK2 through conformational rearrangements. Interacts (unphosphorylated form) with CDK2. Forms a complex with CDK2 and SPDYA, but does not directly interact with SPDYA. Forms a ternary complex composed of cyclin D, CDK4 and CDKN1B. Interacts (phosphorylated on Tyr-88 and Tyr-89) with CDK4; the interaction is required for cyclin D and CDK4 complex assembly, induces nuclear translocation and activates the CDK4 kinase activity. Interacts with GRB2. Interacts with PIM1. Identified in a complex with SKP1, SKP2 and CKS1B. Interacts with UHMK1; the interaction leads to cytoplasmic mislocation, phosphorylation of CDKN1B and inhibition of cell cycle arrest. Also interacts with CDK1. Dephosphorylated on Thr-187 by PPM1H, leading to CDKN1B stability. Interacts with HSPA8; the interaction may be associated with susceptibility to ubiquitination. Post-translationally, phosphorylated; phosphorylation occurs on serine, threonine and tyrosine residues. Phosphorylation on Ser-10 is the major site of phosphorylation in resting cells, takes place at the G(0)-G(1) phase and leads to protein stability. Phosphorylation on other sites is greatly enhanced by mitogens, growth factors, cMYC and in certain cancer cell lines. The phosphorylated form found in the cytoplasm is inactivate. Phosphorylation on Thr-198 is required for interaction with 14-3-3 proteins. Phosphorylation on Thr-187, by CDK1 and CDK2 leads to protein ubiquitination and proteasomal degradation. Tyrosine phosphorylation promotes this process. Phosphorylation by PKB/AKT1 can be suppressed by LY294002, an inhibitor of the catalytic subunit of PI3K. Phosphorylation on Tyr-88 and Tyr-89 has no effect on binding CDK2, but is required for binding CDK4. Dephosphorylated on tyrosine residues by G-CSF. Ubiquitinated; in the cytoplasm by the KPC complex (composed of RNF123/KPC1 and UBAC1/KPC2) and, in the nucleus, by SCF(SKP2). The latter requires prior phosphorylation on Thr-187. Ubiquitinated; by a TRIM21-containing SCF(SKP2)-like complex; leads to its degradation. In terms of processing, subject to degradation in the lysosome. Interaction with SNX6 promotes lysosomal degradation. Expressed in kidney (at protein level). Expressed in all tissues tested. Highest levels in skeletal muscle, lowest in liver and kidney.

The protein resides in the nucleus. The protein localises to the cytoplasm. It localises to the endosome. Important regulator of cell cycle progression. Inhibits the kinase activity of CDK2 bound to cyclin A, but has little inhibitory activity on CDK2 bound to SPDYA. Involved in G1 arrest. Potent inhibitor of cyclin E- and cyclin A-CDK2 complexes. Forms a complex with cyclin type D-CDK4 complexes and is involved in the assembly, stability, and modulation of CCND1-CDK4 complex activation. Acts either as an inhibitor or an activator of cyclin type D-CDK4 complexes depending on its phosphorylation state and/or stoichometry. The chain is Cyclin-dependent kinase inhibitor 1B from Homo sapiens (Human).